The following is a 267-amino-acid chain: Hydroxyethylthiazole kinase (267 aa).

Residue Met46 participates in substrate binding. ATP contacts are provided by Arg122 and Ser168. A substrate-binding site is contributed by Gly195.

This sequence belongs to the Thz kinase family. Mg(2+) is required as a cofactor.

The enzyme catalyses 5-(2-hydroxyethyl)-4-methylthiazole + ATP = 4-methyl-5-(2-phosphooxyethyl)-thiazole + ADP + H(+). Its pathway is cofactor biosynthesis; thiamine diphosphate biosynthesis; 4-methyl-5-(2-phosphoethyl)-thiazole from 5-(2-hydroxyethyl)-4-methylthiazole: step 1/1. Functionally, catalyzes the phosphorylation of the hydroxyl group of 4-methyl-5-beta-hydroxyethylthiazole (THZ). The chain is Hydroxyethylthiazole kinase from Nitratidesulfovibrio vulgaris (strain ATCC 29579 / DSM 644 / CCUG 34227 / NCIMB 8303 / VKM B-1760 / Hildenborough) (Desulfovibrio vulgaris).